The following is a 161-amino-acid chain: Nucleotide-binding protein Sama_2557 (161 aa).

This sequence belongs to the YajQ family.

In terms of biological role, nucleotide-binding protein. The chain is Nucleotide-binding protein Sama_2557 from Shewanella amazonensis (strain ATCC BAA-1098 / SB2B).